Reading from the N-terminus, the 217-residue chain is Adenylate kinase (217 aa).

10–15 (GAGKGT) serves as a coordination point for ATP. An NMP region spans residues 30 to 59 (STGDIFRQNLRDNTDLGKLAKEYMDKGLLV). AMP is bound by residues threonine 31, arginine 36, 57-59 (LLV), 85-88 (GYPR), and glutamine 92. The tract at residues 126–163 (GRRVCPNCGATYHIKTSPPAVDNVCDKCGAQLIQRSDD) is LID. Arginine 127 is a binding site for ATP. Residues cysteine 130 and cysteine 133 each contribute to the Zn(2+) site. Position 136–137 (136–137 (TY)) interacts with ATP. Residues cysteine 150 and cysteine 153 each coordinate Zn(2+). AMP-binding residues include arginine 160 and arginine 171. Residue lysine 199 participates in ATP binding.

Belongs to the adenylate kinase family. As to quaternary structure, monomer.

Its subcellular location is the cytoplasm. It carries out the reaction AMP + ATP = 2 ADP. It participates in purine metabolism; AMP biosynthesis via salvage pathway; AMP from ADP: step 1/1. In terms of biological role, catalyzes the reversible transfer of the terminal phosphate group between ATP and AMP. Plays an important role in cellular energy homeostasis and in adenine nucleotide metabolism. In Thermoanaerobacter pseudethanolicus (strain ATCC 33223 / 39E) (Clostridium thermohydrosulfuricum), this protein is Adenylate kinase.